Consider the following 120-residue polypeptide: Glutamate--tRNA ligase (120 aa).

This sequence belongs to the class-I aminoacyl-tRNA synthetase family. Glutamate--tRNA ligase type 1 subfamily. As to quaternary structure, monomer.

The protein localises to the cytoplasm. The enzyme catalyses tRNA(Glu) + L-glutamate + ATP = L-glutamyl-tRNA(Glu) + AMP + diphosphate. In terms of biological role, catalyzes the attachment of glutamate to tRNA(Glu) in a two-step reaction: glutamate is first activated by ATP to form Glu-AMP and then transferred to the acceptor end of tRNA(Glu). The sequence is that of Glutamate--tRNA ligase (gltX) from Staphylococcus xylosus.